The primary structure comprises 195 residues: Molybdopterin synthase catalytic subunit (195 aa).

The segment at methionine 1–glycine 37 is disordered. Over residues proline 25 to glycine 37 the composition is skewed to low complexity. Substrate-binding positions include histidine 141 to arginine 142, lysine 157, and lysine 164 to glutamate 166.

The protein belongs to the MoaE family. MOCS2B subfamily. Heterotetramer; composed of 2 small (MOCS2A) and 2 large (MOCS2B) subunits.

It is found in the cytoplasm. It catalyses the reaction 2 [molybdopterin-synthase sulfur-carrier protein]-C-terminal-Gly-aminoethanethioate + cyclic pyranopterin phosphate + H2O = molybdopterin + 2 [molybdopterin-synthase sulfur-carrier protein]-C-terminal Gly-Gly + 2 H(+). Its pathway is cofactor biosynthesis; molybdopterin biosynthesis. Functionally, catalytic subunit of the molybdopterin synthase complex, a complex that catalyzes the conversion of precursor Z into molybdopterin. Acts by mediating the incorporation of 2 sulfur atoms from thiocarboxylated MOCS2A into precursor Z to generate a dithiolene group. The chain is Molybdopterin synthase catalytic subunit from Emericella nidulans (strain FGSC A4 / ATCC 38163 / CBS 112.46 / NRRL 194 / M139) (Aspergillus nidulans).